The following is a 348-amino-acid chain: tRNA pseudouridine synthase D (348 aa).

D84 acts as the Nucleophile in catalysis. Positions 162–308 constitute a TRUD domain; it reads GVPNYFGPQR…ARMDRRPLCL (147 aa).

Belongs to the pseudouridine synthase TruD family.

It carries out the reaction uridine(13) in tRNA = pseudouridine(13) in tRNA. Functionally, responsible for synthesis of pseudouridine from uracil-13 in transfer RNAs. The chain is tRNA pseudouridine synthase D from Chromohalobacter salexigens (strain ATCC BAA-138 / DSM 3043 / CIP 106854 / NCIMB 13768 / 1H11).